The following is a 591-amino-acid chain: Aspartate--tRNA(Asp/Asn) ligase (591 aa).

Residue glutamate 175 coordinates L-aspartate. The interval glutamine 199–lysine 202 is aspartate. Residues arginine 221 and histidine 453 each coordinate L-aspartate. Arginine 221–glutamate 223 contacts ATP. Glutamate 486 provides a ligand contact to ATP. Position 493 (arginine 493) interacts with L-aspartate. Glycine 538–arginine 541 contacts ATP.

This sequence belongs to the class-II aminoacyl-tRNA synthetase family. Type 1 subfamily. Homodimer.

The protein resides in the cytoplasm. The enzyme catalyses tRNA(Asx) + L-aspartate + ATP = L-aspartyl-tRNA(Asx) + AMP + diphosphate. Functionally, aspartyl-tRNA synthetase with relaxed tRNA specificity since it is able to aspartylate not only its cognate tRNA(Asp) but also tRNA(Asn). Reaction proceeds in two steps: L-aspartate is first activated by ATP to form Asp-AMP and then transferred to the acceptor end of tRNA(Asp/Asn). The sequence is that of Aspartate--tRNA(Asp/Asn) ligase from Cereibacter sphaeroides (strain KD131 / KCTC 12085) (Rhodobacter sphaeroides).